A 460-amino-acid polypeptide reads, in one-letter code: Monocarboxylate transporter 12 (460 aa).

Residues 1-10 are Cytoplasmic-facing; it reads MTQEKRSLHK. 12 helical membrane-spanning segments follow: residues 11 to 31, 58 to 78, 86 to 106, 115 to 135, 148 to 168, 177 to 197, 246 to 266, 282 to 302, 329 to 349, 354 to 374, 376 to 396, and 406 to 426; these read TPPDGGWGWMIVIGCFFVTVC, AWIHSIVDCSTMLCAPIGSYV, VGIILGGVLASTGLVLSSFAT, LGVLTGLGFALCYSPAIAMVG, IAMSGSGIGTFILAPVVQLLI, LLILGGFVSNLCVCGALMRPI, FIILAVSFLFLAYGCSPPFVY, AFLMSILGIVDIVGNITFGWV, FLPILTCFQLLVPFSVMFGYF, VALIPVITGDVVGTSNLSSAL, VVFFLHAVPYLLSPPIAGWLV, and FLLSGFSMIFCSILLGLAKII. Residues 427–460 are Cytoplasmic-facing; it reads NRIKKNPQATVVRSSDIKQEVWTNGDVSCLNAIS.

It belongs to the major facilitator superfamily. Monocarboxylate porter (TC 2.A.1.13) family.

Its subcellular location is the cell membrane. It localises to the basolateral cell membrane. It carries out the reaction creatine(in) = creatine(out). The enzyme catalyses guanidinoacetate(in) = guanidinoacetate(out). Functionally, functions as a transporter for creatine and as well for its precursor guanidinoacetate. Transport of creatine and GAA is independent of resting membrane potential and extracellular Na(+), Cl(-), or pH. Contributes to the process of creatine biosynthesis and distribution. In Xenopus laevis (African clawed frog), this protein is Monocarboxylate transporter 12 (slc16a12).